We begin with the raw amino-acid sequence, 276 residues long: Adenylate kinase (276 aa).

50 to 55 (GAGKGT) provides a ligand contact to ATP. The tract at residues 70-99 (ATGDMLRSQVAKKTPLGREAKKIMDQGGLV) is NMP. AMP contacts are provided by residues T71, R76, 97–99 (GLV), 126–129 (GFPR), and Q133. The LID stretch occupies residues 167–204 (GRLVHPASGRSYHTTFNPPKKAMTDDVTGEPLIQRSDD). Residues R168 and 177 to 178 (SY) each bind ATP. Positions 201 and 212 each coordinate AMP. Q240 lines the ATP pocket.

It belongs to the adenylate kinase family. AK2 subfamily. In terms of assembly, monomer.

It is found in the cytoplasm. The protein localises to the cytosol. It localises to the mitochondrion intermembrane space. The enzyme catalyses AMP + ATP = 2 ADP. In terms of biological role, catalyzes the reversible transfer of the terminal phosphate group between ATP and AMP. Plays an important role in cellular energy homeostasis and in adenine nucleotide metabolism. Adenylate kinase activity is critical for regulation of the phosphate utilization and the AMP de novo biosynthesis pathways. This Pyricularia oryzae (strain 70-15 / ATCC MYA-4617 / FGSC 8958) (Rice blast fungus) protein is Adenylate kinase.